The sequence spans 287 residues: Oxaloacetate decarboxylase (287 aa).

Ser-50 serves as a coordination point for substrate. Asp-88 is a Mg(2+) binding site. 2 residues coordinate substrate: Arg-159 and His-235.

This sequence belongs to the isocitrate lyase/PEP mutase superfamily. Oxaloacetate decarboxylase family. As to quaternary structure, homotetramer; dimer of dimers. Mg(2+) is required as a cofactor.

It carries out the reaction oxaloacetate + H(+) = pyruvate + CO2. In terms of biological role, catalyzes the decarboxylation of oxaloacetate into pyruvate. Seems to play a role in maintaining cellular concentrations of bicarbonate and pyruvate. This chain is Oxaloacetate decarboxylase, found in Marinomonas sp. (strain MWYL1).